A 469-amino-acid polypeptide reads, in one-letter code: GTPase Der (469 aa).

EngA-type G domains follow at residues 3 to 167 (PTLV…PEEE) and 176 to 349 (PKIA…AAAF). GTP is bound by residues 9–16 (GRPNVGKS), 56–60 (DTGGL), 119–122 (NKAE), 182–189 (GRPNVGKS), 229–233 (DTAGV), and 294–297 (NKWD). One can recognise a KH-like domain in the interval 350–436 (IKLSTPKLTR…RIQIKEDEGK (87 aa)). The span at 432 to 443 (EDEGKNPFEGKK) shows a compositional bias: basic and acidic residues. Residues 432-469 (EDEGKNPFEGKKRAPLSESEATRMRRKKRVRRKVYGAD) are disordered. Over residues 455–469 (MRRKKRVRRKVYGAD) the composition is skewed to basic residues.

This sequence belongs to the TRAFAC class TrmE-Era-EngA-EngB-Septin-like GTPase superfamily. EngA (Der) GTPase family. In terms of assembly, associates with the 50S ribosomal subunit.

Its function is as follows. GTPase that plays an essential role in the late steps of ribosome biogenesis. The sequence is that of GTPase Der from Thiobacillus denitrificans (strain ATCC 25259 / T1).